Consider the following 378-residue polypeptide: Lipoyl synthase, mitochondrial (378 aa).

[4Fe-4S] cluster is bound by residues Cys-109, Cys-114, Cys-120, Cys-140, Cys-144, Cys-147, and Ser-356. In terms of domain architecture, Radical SAM core spans 125–345 (ETGTATATIM…QTLGMEMGFR (221 aa)).

The protein belongs to the radical SAM superfamily. Lipoyl synthase family. [4Fe-4S] cluster is required as a cofactor.

Its subcellular location is the mitochondrion. The enzyme catalyses [[Fe-S] cluster scaffold protein carrying a second [4Fe-4S](2+) cluster] + N(6)-octanoyl-L-lysyl-[protein] + 2 oxidized [2Fe-2S]-[ferredoxin] + 2 S-adenosyl-L-methionine + 4 H(+) = [[Fe-S] cluster scaffold protein] + N(6)-[(R)-dihydrolipoyl]-L-lysyl-[protein] + 4 Fe(3+) + 2 hydrogen sulfide + 2 5'-deoxyadenosine + 2 L-methionine + 2 reduced [2Fe-2S]-[ferredoxin]. Its pathway is protein modification; protein lipoylation via endogenous pathway; protein N(6)-(lipoyl)lysine from octanoyl-[acyl-carrier-protein]: step 2/2. In terms of biological role, catalyzes the radical-mediated insertion of two sulfur atoms into the C-6 and C-8 positions of the octanoyl moiety bound to the lipoyl domains of lipoate-dependent enzymes, thereby converting the octanoylated domains into lipoylated derivatives. The protein is Lipoyl synthase, mitochondrial of Medicago truncatula (Barrel medic).